The chain runs to 234 residues: Tissue factor pathway inhibitor 2 (234 aa).

Residues 1–22 form the signal peptide; the sequence is MDSVRPLWLMLLSLLLVGTALG. 3 BPTI/Kunitz inhibitor domains span residues 36 to 86, 96 to 146, and 155 to 205; these read CLLP…NEAC, CRLK…MDFC, and CYSP…KRTC. 9 disulfide bridges follow: Cys36–Cys86, Cys45–Cys69, Cys61–Cys82, Cys96–Cys146, Cys105–Cys129, Cys121–Cys142, Cys155–Cys205, Cys164–Cys188, and Cys180–Cys201. A glycan (N-linked (GlcNAc...) asparagine) is linked at Asn115. Asn167 and Asn184 each carry an N-linked (GlcNAc...) asparagine glycan.

In terms of assembly, finds in a complex with ABCB1, TFPI2 and PPP2R3C; leading to the dephosphorylation of ABCB1.

The protein resides in the secreted. In terms of biological role, may play a role in the regulation of plasmin-mediated matrix remodeling. Inhibits trypsin, plasmin, factor VIIa/tissue factor and weakly factor Xa. Has no effect on thrombin. This Bos taurus (Bovine) protein is Tissue factor pathway inhibitor 2 (TFPI2).